A 176-amino-acid chain; its full sequence is Co-chaperone protein HscB (176 aa).

Positions 2–74 (DYFTLFGLPA…LMRAEYLLSL (73 aa)) constitute a J domain.

It belongs to the HscB family. As to quaternary structure, interacts with HscA and stimulates its ATPase activity. Interacts with IscU.

Functionally, co-chaperone involved in the maturation of iron-sulfur cluster-containing proteins. Seems to help targeting proteins to be folded toward HscA. The sequence is that of Co-chaperone protein HscB from Escherichia coli O7:K1 (strain IAI39 / ExPEC).